We begin with the raw amino-acid sequence, 191 residues long: MKDEHNQEHDHLSPKEPESYQKAYACKEQQGEEKQEASEKEGEIKEDFELKYQEMREQYLRVHADFENVKKRLERDKSMALEYAYEKIALDLLPVIDALLGAHKSAVEVDKESALTKGLELTMEKLHEVLARHGIEGIECLEEFDPNFHNAIMQVKSEEKENGKIVQVLQQGYKYKGRVLRPAMVSIAKND.

Composition is skewed to basic and acidic residues over residues 1–19 and 29–45; these read MKDE…EPES and QQGE…GEIK. Residues 1-45 form a disordered region; the sequence is MKDEHNQEHDHLSPKEPESYQKAYACKEQQGEEKQEASEKEGEIK.

The protein belongs to the GrpE family. As to quaternary structure, homodimer.

Its subcellular location is the cytoplasm. In terms of biological role, participates actively in the response to hyperosmotic and heat shock by preventing the aggregation of stress-denatured proteins, in association with DnaK and GrpE. It is the nucleotide exchange factor for DnaK and may function as a thermosensor. Unfolded proteins bind initially to DnaJ; upon interaction with the DnaJ-bound protein, DnaK hydrolyzes its bound ATP, resulting in the formation of a stable complex. GrpE releases ADP from DnaK; ATP binding to DnaK triggers the release of the substrate protein, thus completing the reaction cycle. Several rounds of ATP-dependent interactions between DnaJ, DnaK and GrpE are required for fully efficient folding. The protein is Protein GrpE of Helicobacter pylori (strain J99 / ATCC 700824) (Campylobacter pylori J99).